We begin with the raw amino-acid sequence, 354 residues long: NADH-quinone oxidoreductase subunit H (354 aa).

The next 8 membrane-spanning stretches (helical) occupy residues 25–45, 91–111, 126–146, 170–190, 205–225, 253–273, 290–310, and 330–350; these read LVRI…LILW, WLYL…WAVI, LLYA…AGWA, MGFA…SEIV, FLSW…ISGI, MAFA…SALA, FIPG…VFIW, and VFLP…MSPL.

Belongs to the complex I subunit 1 family. NDH-1 is composed of 14 different subunits. Subunits NuoA, H, J, K, L, M, N constitute the membrane sector of the complex.

Its subcellular location is the cell inner membrane. The enzyme catalyses a quinone + NADH + 5 H(+)(in) = a quinol + NAD(+) + 4 H(+)(out). Its function is as follows. NDH-1 shuttles electrons from NADH, via FMN and iron-sulfur (Fe-S) centers, to quinones in the respiratory chain. The immediate electron acceptor for the enzyme in this species is believed to be ubiquinone. Couples the redox reaction to proton translocation (for every two electrons transferred, four hydrogen ions are translocated across the cytoplasmic membrane), and thus conserves the redox energy in a proton gradient. This subunit may bind ubiquinone. In Burkholderia thailandensis (strain ATCC 700388 / DSM 13276 / CCUG 48851 / CIP 106301 / E264), this protein is NADH-quinone oxidoreductase subunit H.